Reading from the N-terminus, the 756-residue chain is 5-methyltetrahydropteroyltriglutamate--homocysteine methyltransferase (756 aa).

5-methyltetrahydropteroyltri-L-glutamate contacts are provided by residues 16 to 19 (RELK) and K112. Residues 432 to 434 (IGS) and E485 contribute to the L-homocysteine site. Residues 432 to 434 (IGS) and E485 contribute to the L-methionine site. Residues 516–517 (RC) and W562 each bind 5-methyltetrahydropteroyltri-L-glutamate. D600 contacts L-homocysteine. An L-methionine-binding site is contributed by D600. E606 serves as a coordination point for 5-methyltetrahydropteroyltri-L-glutamate. Positions 642, 644, and 666 each coordinate Zn(2+). The active-site Proton donor is the H695. C727 contributes to the Zn(2+) binding site.

It belongs to the vitamin-B12 independent methionine synthase family. Requires Zn(2+) as cofactor.

It carries out the reaction 5-methyltetrahydropteroyltri-L-glutamate + L-homocysteine = tetrahydropteroyltri-L-glutamate + L-methionine. It participates in amino-acid biosynthesis; L-methionine biosynthesis via de novo pathway; L-methionine from L-homocysteine (MetE route): step 1/1. Functionally, catalyzes the transfer of a methyl group from 5-methyltetrahydrofolate to homocysteine resulting in methionine formation. This is 5-methyltetrahydropteroyltriglutamate--homocysteine methyltransferase from Haemophilus influenzae (strain PittGG).